Reading from the N-terminus, the 256-residue chain is ATP-dependent dethiobiotin synthetase BioD (256 aa).

ATP is bound at residue 13–18; it reads EVGKTY. A Mg(2+)-binding site is contributed by T17. K38 is an active-site residue. Residue S42 coordinates substrate. Residues D56, 118-121, and 187-188 contribute to the ATP site; these read EGAG and NR. D56 and E118 together coordinate Mg(2+).

It belongs to the dethiobiotin synthetase family. In terms of assembly, homodimer. Mg(2+) serves as cofactor.

It is found in the cytoplasm. It catalyses the reaction (7R,8S)-7,8-diammoniononanoate + CO2 + ATP = (4R,5S)-dethiobiotin + ADP + phosphate + 3 H(+). It functions in the pathway cofactor biosynthesis; biotin biosynthesis; biotin from 7,8-diaminononanoate: step 1/2. Its function is as follows. Catalyzes a mechanistically unusual reaction, the ATP-dependent insertion of CO2 between the N7 and N8 nitrogen atoms of 7,8-diaminopelargonic acid (DAPA, also called 7,8-diammoniononanoate) to form a ureido ring. In Rhodopirellula baltica (strain DSM 10527 / NCIMB 13988 / SH1), this protein is ATP-dependent dethiobiotin synthetase BioD.